The primary structure comprises 107 residues: Nucleoid-associated protein NE0434 (107 aa).

This sequence belongs to the YbaB/EbfC family. In terms of assembly, homodimer.

The protein localises to the cytoplasm. It is found in the nucleoid. In terms of biological role, binds to DNA and alters its conformation. May be involved in regulation of gene expression, nucleoid organization and DNA protection. This chain is Nucleoid-associated protein NE0434, found in Nitrosomonas europaea (strain ATCC 19718 / CIP 103999 / KCTC 2705 / NBRC 14298).